The primary structure comprises 133 residues: Small ribosomal subunit protein uS8 (133 aa).

The protein belongs to the universal ribosomal protein uS8 family. As to quaternary structure, part of the 30S ribosomal subunit. Contacts proteins S5 and S12.

Functionally, one of the primary rRNA binding proteins, it binds directly to 16S rRNA central domain where it helps coordinate assembly of the platform of the 30S subunit. This Parasynechococcus marenigrum (strain WH8102) protein is Small ribosomal subunit protein uS8.